We begin with the raw amino-acid sequence, 714 residues long: G protein-coupled receptor kinase 2 (714 aa).

The segment at 1-308 is N-terminal; sequence MELENIVANT…LEAQPITYKT (308 aa). RGS domains follow at residues 53–174 and 177–294; these read YGYV…SQHS and INHK…HRYL. A disordered region spans residues 141 to 229; that stretch reads SNANPTETAE…GGGEGGGGGK (89 aa). The segment covering 154–175 has biased composition (low complexity); it reads CNNTTANNCNNINNSNNSQHSS. 2 stretches are compositionally biased toward basic and acidic residues: residues 176–190 and 199–220; these read DINH…HNGD and HQDD…EKGG. A Protein kinase domain is found at 309–574; sequence FRMYRVLGKG…GQDVMAHPFF (266 aa). ATP contacts are provided by residues 315–323 and lysine 338; that span reads LGKGGFGEV. The Proton acceptor role is filled by aspartate 435. Residues 577-642 enclose the AGC-kinase C-terminal domain; it reads TQLNWRRLEA…GSVSISWQNE (66 aa). Serine 612 is modified (phosphoserine). Residue threonine 613 is modified to Phosphothreonine. A disordered region spans residues 667-714; sequence INAAPEPDKAGCFPFRRKKKQPARTQPIPIPEHLLTTSHSVSSTTVES. The segment covering 698–714 has biased composition (low complexity); sequence EHLLTTSHSVSSTTVES.

It belongs to the protein kinase superfamily. AGC Ser/Thr protein kinase family. GPRK subfamily. Expressed in all larval tissues and in adult ovaries. Larval CNS staining is localized to axons projecting to the optic lobes and the mushroom bodies, in the longitudinal connectives, and in cell bodies and nerves of the ring gland corpus allatum. Adult CNS staining is detectable only in cell bodies and processes associated with the ellipsoid body of the central complex and portions of the mushroom bodies. In the wing disk, expression is confined to a stripe that parallels the anterior/posterior boundary of the wing blade and the hinge region, and weak expression in the prospective notum.

It localises to the membrane. The enzyme catalyses [G-protein-coupled receptor] + ATP = [G-protein-coupled receptor]-phosphate + ADP + H(+). In terms of biological role, specifically phosphorylates the activated forms of G protein-coupled receptors. Required during oogenesis and embryogenesis; component of a signaling pathway that functions during egg chamber maturation. The chain is G protein-coupled receptor kinase 2 (Gprk2) from Drosophila melanogaster (Fruit fly).